A 181-amino-acid polypeptide reads, in one-letter code: Probable pyruvoyl-dependent arginine decarboxylase (181 aa).

Serine 43 carries the post-translational modification Pyruvic acid (Ser).

Belongs to the PdaD family. Requires pyruvate as cofactor.

The enzyme catalyses L-arginine + H(+) = agmatine + CO2. This chain is Probable pyruvoyl-dependent arginine decarboxylase, found in Chlorobaculum parvum (strain DSM 263 / NCIMB 8327) (Chlorobium vibrioforme subsp. thiosulfatophilum).